We begin with the raw amino-acid sequence, 72 residues long: MSKSDYIELEGFVKEKLPNTTFMVELENGHCILAHISGKIRKHYIRILPGDKVTVEMTPYDLTKGRITFRHK.

An S1-like domain is found at 1-72; the sequence is MSKSDYIELE…TKGRITFRHK (72 aa).

It belongs to the IF-1 family. As to quaternary structure, component of the 30S ribosomal translation pre-initiation complex which assembles on the 30S ribosome in the order IF-2 and IF-3, IF-1 and N-formylmethionyl-tRNA(fMet); mRNA recruitment can occur at any time during PIC assembly.

Its subcellular location is the cytoplasm. In terms of biological role, one of the essential components for the initiation of protein synthesis. Stabilizes the binding of IF-2 and IF-3 on the 30S subunit to which N-formylmethionyl-tRNA(fMet) subsequently binds. Helps modulate mRNA selection, yielding the 30S pre-initiation complex (PIC). Upon addition of the 50S ribosomal subunit IF-1, IF-2 and IF-3 are released leaving the mature 70S translation initiation complex. The polypeptide is Translation initiation factor IF-1 (Vesicomyosocius okutanii subsp. Calyptogena okutanii (strain HA)).